We begin with the raw amino-acid sequence, 553 residues long: MLSVRVAAAVARALPRRAGLVSKNALGSSFVAARNLHASNTRLQKTGTAEVSSILEERILGADTSVDLEETGRVLSIGDGIARVHGLRNVQAEEMVEFSSGLKGMSLNLEPDNVGVVVFGNDKLIKEGDIVKRTGAIVDVPVGEELLGRVVDALGNAIDGKGPIGSKTRRRVGLKAPGIIPRISVREPMQTGIKAVDSLVPIGRGQRELIIGDRQTGKTSIAIDTIINQKRFNDGTDEKKKLYCIYVAIGQKRSTVAQLVKRLTDADAMKYTIVVSATASDAAPLQYLAPYSGCSMGEYFRDNGKHALIIYDDLSKQAVAYRQMSLLLRRPPGREAYPGDVFYLHSRLLERAAKMNDAFGGGSLTALPVIETQAGDVSAYIPTNVISITDGQIFLETELFYKGIRPAINVGLSVSRVGSAAQTRAMKQVAGTMKLELAQYREVAAFAQFGSDLDAATQQLLSRGVRLTELLKQGQYAPMAIEEQVAVIYAGVRGYLDKLEPSKITKFENAFLSHVISQHQALLGKIRADGKISEETDAKLKEIVTNFLAGFEA.

A mitochondrion-targeting transit peptide spans 1–43; that stretch reads MLSVRVAAAVARALPRRAGLVSKNALGSSFVAARNLHASNTRL. A phosphoserine mark is found at Ser53 and Ser65. Phosphoserine; alternate is present on Ser76. The O-linked (GlcNAc) serine; alternate glycan is linked to Ser76. A Phosphoserine modification is found at Ser106. 3 positions are modified to N6-acetyllysine: Lys123, Lys126, and Lys132. Thr134 carries the post-translational modification Phosphothreonine. Position 161 is an N6-acetyllysine; alternate (Lys161). Lys161 bears the N6-succinyllysine; alternate mark. At Ser166 the chain carries Phosphoserine. Lys167 is subject to N6-acetyllysine; alternate. An N6-succinyllysine; alternate modification is found at Lys167. Residue Ser184 is modified to Phosphoserine. Arg204 is subject to Omega-N-methylarginine. The ATP site is built by Gln215, Gly217, Lys218, Thr219, and Ser220. Residue Thr219 coordinates Mg(2+). Residues Lys230 and Lys239 each carry the N6-acetyllysine; alternate modification. Lys230 and Lys239 each carry N6-succinyllysine; alternate. N6-acetyllysine is present on Lys240. 2 positions are modified to N6-acetyllysine; alternate: Lys261 and Lys305. Residues Lys261 and Lys305 each carry the N6-succinyllysine; alternate modification. Asp312 lines the Mg(2+) pocket. The residue at position 427 (Lys427) is an N6-acetyllysine; alternate. At Lys427 the chain carries N6-succinyllysine; alternate. Lys434 carries the N6-acetyllysine modification. Gln473 and Gln475 together coordinate ATP. N6-acetyllysine; alternate is present on residues Lys498, Lys506, Lys531, and Lys539. An N6-succinyllysine; alternate mark is found at Lys498, Lys506, Lys531, and Lys539. Lys541 is subject to N6-acetyllysine.

The protein belongs to the ATPase alpha/beta chains family. As to quaternary structure, homotrimer. Component of the ATP synthase complex composed at least of ATP5F1A/subunit alpha, ATP5F1B/subunit beta, ATP5MC1/subunit c (homooctomer), MT-ATP6/subunit a, MT-ATP8/subunit 8, ATP5ME/subunit e, ATP5MF/subunit f, ATP5MG/subunit g, ATP5MK/subunit k, ATP5MJ/subunit j, ATP5F1C/subunit gamma, ATP5F1D/subunit delta, ATP5F1E/subunit epsilon, ATP5PF/subunit F6, ATP5PB/subunit b, ATP5PD/subunit d, ATP5PO/subunit OSCP. ATP synthase complex consists of a soluble F(1) head domain (subunits alpha(3) and beta(3)) - the catalytic core - and a membrane F(0) domain - the membrane proton channel (subunits c, a, 8, e, f, g, k and j). These two domains are linked by a central stalk (subunits gamma, delta, and epsilon) rotating inside the F1 region and a stationary peripheral stalk (subunits F6, b, d, and OSCP). Interacts with ATPAF2. Interacts with HRG; the interaction occurs on the surface of T-cells and alters the cell morphology when associated with concanavalin (in vitro). Interacts with PLG (angiostatin peptide); the interaction inhibits most of the angiogenic properties of angiostatin. Interacts with BLOC1S1. Interacts with BCL2L1 isoform BCL-X(L); the interaction mediates the association of BCL2L1 isoform BCL-X(L) with the mitochondrial membrane F(1)F(0) ATP synthase and enhances neurons metabolic efficiency. Interacts with CLN5 and PPT1. Interacts with S100A1; this interaction increases F1-ATPase activity. Interacts with ABCB7; this interaction allows the regulation of cellular iron homeostasis and cellular reactive oxygen species (ROS) levels in cardiomyocytes. Post-translationally, acetylated on lysine residues. BLOC1S1 is required for acetylation. Expressed in heart (at protein level).

The protein resides in the mitochondrion. The protein localises to the mitochondrion inner membrane. Its subcellular location is the cell membrane. In terms of biological role, subunit alpha, of the mitochondrial membrane ATP synthase complex (F(1)F(0) ATP synthase or Complex V) that produces ATP from ADP in the presence of a proton gradient across the membrane which is generated by electron transport complexes of the respiratory chain. ATP synthase complex consist of a soluble F(1) head domain - the catalytic core - and a membrane F(1) domain - the membrane proton channel. These two domains are linked by a central stalk rotating inside the F(1) region and a stationary peripheral stalk. During catalysis, ATP synthesis in the catalytic domain of F(1) is coupled via a rotary mechanism of the central stalk subunits to proton translocation. In vivo, can only synthesize ATP although its ATP hydrolase activity can be activated artificially in vitro. With the catalytic subunit beta (ATP5F1B), forms the catalytic core in the F(1) domain. Subunit alpha does not bear the catalytic high-affinity ATP-binding sites. This Sus scrofa (Pig) protein is ATP synthase F(1) complex subunit alpha, mitochondrial.